Reading from the N-terminus, the 394-residue chain is Phosphoglycerate kinase (394 aa).

Substrate-binding positions include 21-23 (DFN), Arg-36, 59-62 (HLGR), Arg-118, and Arg-151. At Ser-183 the chain carries Phosphoserine. ATP-binding residues include Lys-201 and Gly-292. The residue at position 299 (Thr-299) is a Phosphothreonine. Residues Glu-323 and 350–353 (GGDS) contribute to the ATP site.

Belongs to the phosphoglycerate kinase family. In terms of assembly, monomer.

Its subcellular location is the cytoplasm. It carries out the reaction (2R)-3-phosphoglycerate + ATP = (2R)-3-phospho-glyceroyl phosphate + ADP. It participates in carbohydrate degradation; glycolysis; pyruvate from D-glyceraldehyde 3-phosphate: step 2/5. This Bacillus cereus (strain G9842) protein is Phosphoglycerate kinase.